A 359-amino-acid chain; its full sequence is Uroporphyrinogen decarboxylase (359 aa).

Substrate-binding positions include 36 to 40 (RQAGR), Asp85, Tyr160, Ser215, and His338.

Belongs to the uroporphyrinogen decarboxylase family. Homodimer.

Its subcellular location is the cytoplasm. It catalyses the reaction uroporphyrinogen III + 4 H(+) = coproporphyrinogen III + 4 CO2. The protein operates within porphyrin-containing compound metabolism; protoporphyrin-IX biosynthesis; coproporphyrinogen-III from 5-aminolevulinate: step 4/4. Catalyzes the decarboxylation of four acetate groups of uroporphyrinogen-III to yield coproporphyrinogen-III. The polypeptide is Uroporphyrinogen decarboxylase (Corynebacterium efficiens (strain DSM 44549 / YS-314 / AJ 12310 / JCM 11189 / NBRC 100395)).